The primary structure comprises 223 residues: MIDLKIESSWREVLLDEFQKPYFNSLKEFLVGEKQKYTLYPHSSNIFAAFESTPFESVKVVILGQDPYHGVNQAHGLAFSVNDGVPPPPSLCNIFKELHDDIGCEIPKSGNLMSWAKEGVFLLNTVLSVRASEANSHKNRGWEVFTDTVIRLLSEKKENLVFILWGAPAGAKASLIDEKKHLILKAPHPSPLSSYRGFFGSKPFSKTDEYLISKGLKPVEWCI.

D66 serves as the catalytic Proton acceptor.

The protein belongs to the uracil-DNA glycosylase (UDG) superfamily. UNG family.

The protein resides in the cytoplasm. The enzyme catalyses Hydrolyzes single-stranded DNA or mismatched double-stranded DNA and polynucleotides, releasing free uracil.. In terms of biological role, excises uracil residues from the DNA which can arise as a result of misincorporation of dUMP residues by DNA polymerase or due to deamination of cytosine. This chain is Uracil-DNA glycosylase, found in Sulfurimonas denitrificans (strain ATCC 33889 / DSM 1251) (Thiomicrospira denitrificans (strain ATCC 33889 / DSM 1251)).